The sequence spans 343 residues: Type II restriction enzyme BsuMI component YdiS (343 aa).

As to quaternary structure, bsuMI restriction activity requires YdiR, YdiS and YdjA.

It catalyses the reaction Endonucleolytic cleavage of DNA to give specific double-stranded fragments with terminal 5'-phosphates.. In terms of biological role, a P subtype restriction enzyme that recognizes the double-stranded sequence 5'-CTCGAG-3'; the cleavage site is unknown. The polypeptide is Type II restriction enzyme BsuMI component YdiS (ydiS) (Bacillus subtilis (strain 168)).